The following is a 204-amino-acid chain: Pyridoxal 5'-phosphate synthase subunit PdxT (204 aa).

52–54 (GES) provides a ligand contact to L-glutamine. Cys84 serves as the catalytic Nucleophile. L-glutamine-binding positions include Arg116 and 143–144 (IR). Catalysis depends on charge relay system residues His184 and Glu186.

It belongs to the glutaminase PdxT/SNO family. In the presence of PdxS, forms a dodecamer of heterodimers. Only shows activity in the heterodimer.

The catalysed reaction is aldehydo-D-ribose 5-phosphate + D-glyceraldehyde 3-phosphate + L-glutamine = pyridoxal 5'-phosphate + L-glutamate + phosphate + 3 H2O + H(+). It carries out the reaction L-glutamine + H2O = L-glutamate + NH4(+). It participates in cofactor biosynthesis; pyridoxal 5'-phosphate biosynthesis. Functionally, catalyzes the hydrolysis of glutamine to glutamate and ammonia as part of the biosynthesis of pyridoxal 5'-phosphate. The resulting ammonia molecule is channeled to the active site of PdxS. This Pyrobaculum arsenaticum (strain DSM 13514 / JCM 11321 / PZ6) protein is Pyridoxal 5'-phosphate synthase subunit PdxT.